The primary structure comprises 266 residues: MTRLSNAFAKGRPALVTFVTGGDPTPGATDAILDALVEGGADVIELGMPFTDPMADGPAIQLANLRSLGAGTKTADVFRIAADFRARHPEVPLVLMGYANPMVTRGPDWFAAECVKAGVDGVICVDIPPEEDPELGPALRGAGVSLIRLATPTTDAARLPAVLEGSSGFLYYVSVAGITGMQQAAQASIEEAVARIKQSATIPVAVGFGVRTPEQAAAIAKVADGVVVGSALVDLVARHGADAAGPVKELTAALAAAVHSARKEIA.

Residues E45 and D56 each act as proton acceptor in the active site.

This sequence belongs to the TrpA family. In terms of assembly, tetramer of two alpha and two beta chains.

It carries out the reaction (1S,2R)-1-C-(indol-3-yl)glycerol 3-phosphate + L-serine = D-glyceraldehyde 3-phosphate + L-tryptophan + H2O. Its pathway is amino-acid biosynthesis; L-tryptophan biosynthesis; L-tryptophan from chorismate: step 5/5. The alpha subunit is responsible for the aldol cleavage of indoleglycerol phosphate to indole and glyceraldehyde 3-phosphate. This chain is Tryptophan synthase alpha chain, found in Novosphingobium aromaticivorans (strain ATCC 700278 / DSM 12444 / CCUG 56034 / CIP 105152 / NBRC 16084 / F199).